The chain runs to 118 residues: Small ribosomal subunit protein uS13 (118 aa).

A disordered region spans residues 94–118 (SLPVRGQRTKTNARTRKGPRKPIKK).

Belongs to the universal ribosomal protein uS13 family. In terms of assembly, part of the 30S ribosomal subunit. Forms a loose heterodimer with protein S19. Forms two bridges to the 50S subunit in the 70S ribosome.

Functionally, located at the top of the head of the 30S subunit, it contacts several helices of the 16S rRNA. In the 70S ribosome it contacts the 23S rRNA (bridge B1a) and protein L5 of the 50S subunit (bridge B1b), connecting the 2 subunits; these bridges are implicated in subunit movement. Contacts the tRNAs in the A and P-sites. In Haemophilus influenzae (strain 86-028NP), this protein is Small ribosomal subunit protein uS13.